The sequence spans 454 residues: Putative tyrosine kinase 36 (454 aa).

Residues 80–88 and lysine 98 each bind ATP; that span reads LGSGSFGKV. Aspartate 192 (proton acceptor) is an active-site residue.

This sequence belongs to the protein kinase superfamily. Tyr protein kinase family.

It catalyses the reaction L-tyrosyl-[protein] + ATP = O-phospho-L-tyrosyl-[protein] + ADP + H(+). This is Putative tyrosine kinase 36 (36) from Alcelaphine herpesvirus 1 (strain C500) (AlHV-1).